A 249-amino-acid polypeptide reads, in one-letter code: Quinate/shikimate dehydrogenase (249 aa).

Positions 32 and 68 each coordinate substrate. Residues 93–96, 116–119, Lys166, 193–196, and Gly216 contribute to the NAD(+) site; these read AGGA, NRRD, and CVYN.

Belongs to the shikimate dehydrogenase family. Homodimer.

The enzyme catalyses L-quinate + NAD(+) = 3-dehydroquinate + NADH + H(+). The catalysed reaction is L-quinate + NADP(+) = 3-dehydroquinate + NADPH + H(+). It catalyses the reaction shikimate + NADP(+) = 3-dehydroshikimate + NADPH + H(+). It carries out the reaction shikimate + NAD(+) = 3-dehydroshikimate + NADH + H(+). It functions in the pathway metabolic intermediate biosynthesis; chorismate biosynthesis; chorismate from D-erythrose 4-phosphate and phosphoenolpyruvate: step 4/7. Functionally, the actual biological function of YdiB remains unclear, nor is it known whether 3-dehydroshikimate or quinate represents the natural substrate. Catalyzes the reversible NAD-dependent reduction of both 3-dehydroshikimate (DHSA) and 3-dehydroquinate to yield shikimate (SA) and quinate, respectively. It can use both NAD or NADP for catalysis, however it has higher catalytic efficiency with NAD. The protein is Quinate/shikimate dehydrogenase of Shigella flexneri serotype 5b (strain 8401).